A 167-amino-acid polypeptide reads, in one-letter code: NADPH-dependent 7-cyano-7-deazaguanine reductase (167 aa).

Residues 1–24 (MTTRSQDQTRDLKVLGTGRLTSPE) are disordered. Cys-57 serves as the catalytic Thioimide intermediate. Asp-64 (proton donor) is an active-site residue. Substrate is bound by residues 79-81 (VES) and 98-99 (ME).

The protein belongs to the GTP cyclohydrolase I family. QueF type 1 subfamily.

Its subcellular location is the cytoplasm. The catalysed reaction is 7-aminomethyl-7-carbaguanine + 2 NADP(+) = 7-cyano-7-deazaguanine + 2 NADPH + 3 H(+). The protein operates within tRNA modification; tRNA-queuosine biosynthesis. In terms of biological role, catalyzes the NADPH-dependent reduction of 7-cyano-7-deazaguanine (preQ0) to 7-aminomethyl-7-deazaguanine (preQ1). The protein is NADPH-dependent 7-cyano-7-deazaguanine reductase of Desulfovibrio desulfuricans (strain ATCC 27774 / DSM 6949 / MB).